Consider the following 37-residue polypeptide: Large ribosomal subunit protein bL36 (37 aa).

Belongs to the bacterial ribosomal protein bL36 family.

This chain is Large ribosomal subunit protein bL36, found in Alkaliphilus metalliredigens (strain QYMF).